Here is a 155-residue protein sequence, read N- to C-terminus: Phospholipase A2 A2-actitoxin-Ucs2a (155 aa).

Positions methionine 1–cysteine 19 are cleaved as a signal peptide. Residues leucine 20 to glutamine 42 constitute a propeptide that is removed on maturation. 6 cysteine pairs are disulfide-bonded: cysteine 55–cysteine 118, cysteine 71–cysteine 87, cysteine 86–cysteine 143, cysteine 93–cysteine 136, cysteine 100–cysteine 129, and cysteine 122–cysteine 134. Residues glycine 72 and glycine 74 each contribute to the Ca(2+) site. Residue histidine 90 is part of the active site. Aspartate 91 is a Ca(2+) binding site. Residue aspartate 137 is part of the active site.

This sequence belongs to the phospholipase A2 family. Requires Ca(2+) as cofactor.

Its subcellular location is the secreted. It is found in the nematocyst. The enzyme catalyses a 1,2-diacyl-sn-glycero-3-phosphocholine + H2O = a 1-acyl-sn-glycero-3-phosphocholine + a fatty acid + H(+). Functionally, PLA2 catalyzes the calcium-dependent hydrolysis of the 2-acyl groups in 3-sn-phosphoglycerides. The polypeptide is Phospholipase A2 A2-actitoxin-Ucs2a (Urticina crassicornis (Mottled anemone)).